Reading from the N-terminus, the 202-residue chain is Glycerol-3-phosphate acyltransferase (202 aa).

6 consecutive transmembrane segments (helical) span residues 3–23 (NLIIYAFIYLLGSISFGLILT), 61–81 (IATIILDFAKAAIPLLILKFL), 87–107 (LLWSVAVLAIFGHCFSIYLLF), 117–137 (AGAMIVLLPLEVLTAFIVWAV), 144–164 (ISSLASLAALLAFIVSSFIFN), and 167–187 (LEIHTHAPVFIIAFIIVYKHL).

It belongs to the PlsY family. In terms of assembly, probably interacts with PlsX.

Its subcellular location is the cell inner membrane. The enzyme catalyses an acyl phosphate + sn-glycerol 3-phosphate = a 1-acyl-sn-glycero-3-phosphate + phosphate. The protein operates within lipid metabolism; phospholipid metabolism. In terms of biological role, catalyzes the transfer of an acyl group from acyl-phosphate (acyl-PO(4)) to glycerol-3-phosphate (G3P) to form lysophosphatidic acid (LPA). This enzyme utilizes acyl-phosphate as fatty acyl donor, but not acyl-CoA or acyl-ACP. In Campylobacter jejuni subsp. doylei (strain ATCC BAA-1458 / RM4099 / 269.97), this protein is Glycerol-3-phosphate acyltransferase.